The following is a 431-amino-acid chain: Trigger factor (431 aa).

Residues 158–243 (GDLVAVETWS…VAEVSEPVVP (86 aa)) enclose the PPIase FKBP-type domain.

Belongs to the FKBP-type PPIase family. Tig subfamily.

The protein resides in the cytoplasm. It catalyses the reaction [protein]-peptidylproline (omega=180) = [protein]-peptidylproline (omega=0). Involved in protein export. Acts as a chaperone by maintaining the newly synthesized protein in an open conformation. Functions as a peptidyl-prolyl cis-trans isomerase. The chain is Trigger factor from Stenotrophomonas maltophilia (strain K279a).